The sequence spans 208 residues: Large ribosomal subunit protein uL4 (208 aa).

Positions 45-78 are disordered; sequence RQGTAKSKERSEMSGSTRKLGRQKGSGGARRGDI.

This sequence belongs to the universal ribosomal protein uL4 family. In terms of assembly, part of the 50S ribosomal subunit.

One of the primary rRNA binding proteins, this protein initially binds near the 5'-end of the 23S rRNA. It is important during the early stages of 50S assembly. It makes multiple contacts with different domains of the 23S rRNA in the assembled 50S subunit and ribosome. Its function is as follows. Forms part of the polypeptide exit tunnel. The polypeptide is Large ribosomal subunit protein uL4 (Azobacteroides pseudotrichonymphae genomovar. CFP2).